A 236-amino-acid polypeptide reads, in one-letter code: CD81 antigen (236 aa).

The Cytoplasmic portion of the chain corresponds to 1 to 12 (MGVEGCTKCIKY). Residues 13–33 (LLFVFNFVFWLAGGVILGVAL) traverse the membrane as a helical segment. At 34–63 (WLRHDPQTTTLLYLELGDKPAPSTFYVGIY) the chain is on the extracellular side. A helical membrane pass occupies residues 64 to 84 (ILIAVGAVMMFVGFLGCYGAI). The Cytoplasmic segment spans residues 85 to 89 (QESQC). Residues 90 to 112 (LLGTFFTCLVILFACEVAAGIWG) form a helical membrane-spanning segment. Over 113 to 201 (FVNKDQIAKD…QKIDELFSGK (89 aa)) the chain is Extracellular. Disulfide bonds link Cys-156–Cys-190 and Cys-157–Cys-175. A helical membrane pass occupies residues 202 to 224 (LYLIGIAAIVVAVIMIFEMILSM). Residue Glu-219 participates in cholesterol binding. Residues 225–236 (VLCCGIRNSSVY) are Cytoplasmic-facing.

This sequence belongs to the tetraspanin (TM4SF) family. In terms of assembly, homodimer. Part of a complex composed of CD19, CR2/CD21, CD81 and IFITM1/CD225 in the membrane of mature B cells. Interacts (via the second extracellular domain) with CD19; this interaction is initiated early during biosynthesis in the ER and enables trafficking of only properly folded CD19. Part of a complex that includes MHC class II/HLA-DR molecules and IFITM1. Interacts with IFITM1. Interacts with IFITM2 and IFITM3. Part of integrin-tetraspanin complex composed of CD9, CD81, beta-1 and beta-2 integrins in the membrane of monocyte/macrophages. Interacts (via the second extracellular domain) with integrin ITGAV:ITGB3. Interacts with CD247/CD3 zeta, ICAM1 and CD9 at the immune synapse on T cell membrane. Part of a GPCR-tetraspanin complex consisting at least of ADGRG1, CD81, possibly CD9, and GNA11 in which CD81 enhances the association of ADGRG1 with GNA11. Part of a complex composed of CD9, CD81, PTGFRN and IGSF8. Interacts directly with IGSF8. Interacts with CD53 and SCIMP. Interacts with SAMHD1 (via its C-terminus). Interacts with glypican GPC3 and with the transcriptional repressor HHEX; binding to GPC3 decreases the availability of free CD81 for binding to HHEX, resulting in nuclear translocation of HHEX and transcriptional repression. Interacts with CLDN1. Interacts with CLDN6 and CLDN9. Post-translationally, not glycosylated. In terms of processing, likely constitutively palmitoylated at low levels. Protein palmitoylation is up-regulated upon coligation of BCR and CD9-C2R-CD81 complexes in lipid rafts.

The protein localises to the cell membrane. It localises to the basolateral cell membrane. Functionally, structural component of specialized membrane microdomains known as tetraspanin-enriched microdomains (TERMs), which act as platforms for receptor clustering and signaling. Essential for trafficking and compartmentalization of CD19 receptor on the surface of activated B cells. Upon initial encounter with microbial pathogens, enables the assembly of CD19-CR2/CD21 and B cell receptor (BCR) complexes at signaling TERMs, lowering the threshold dose of antigen required to trigger B cell clonal expansion and antibody production. In T cells, facilitates the localization of CD247/CD3 zeta at antigen-induced synapses with B cells, providing for costimulation and polarization toward T helper type 2 phenotype. Present in MHC class II compartments, may also play a role in antigen presentation. Can act both as positive and negative regulator of homotypic or heterotypic cell-cell fusion processes. Positively regulates sperm-egg fusion and may be involved in acrosome reaction. In myoblasts, associates with CD9 and PTGFRN and inhibits myotube fusion during muscle regeneration. In macrophages, associates with CD9 and beta-1 and beta-2 integrins, and prevents macrophage fusion into multinucleated giant cells specialized in ingesting complement-opsonized large particles. Also prevents the fusion of mononuclear cell progenitors into osteoclasts in charge of bone resorption. May regulate the compartmentalization of enzymatic activities. In T cells, defines the subcellular localization of dNTPase SAMHD1 and permits its degradation by the proteasome, thereby controlling intracellular dNTP levels. Also involved in cell adhesion and motility. Positively regulates integrin-mediated adhesion of macrophages, particularly relevant for the inflammatory response in the lung. This is CD81 antigen (Cd81) from Rattus norvegicus (Rat).